The following is a 523-amino-acid chain: Asparagine--tRNA ligase (523 aa).

The tract at residues 329–350 (SARGDTPLAARSTARTPPVRTP) is disordered.

The protein belongs to the class-II aminoacyl-tRNA synthetase family. In terms of assembly, homodimer.

It is found in the cytoplasm. It carries out the reaction tRNA(Asn) + L-asparagine + ATP = L-asparaginyl-tRNA(Asn) + AMP + diphosphate + H(+). This chain is Asparagine--tRNA ligase, found in Treponema pallidum (strain Nichols).